A 512-amino-acid chain; its full sequence is Neuronal acetylcholine receptor subunit alpha-3 (512 aa).

Residues 1–23 (MNSASRITLFFLLTVLITQECLS) form the signal peptide. Topologically, residues 24 to 242 (SKGEDRLFRR…PLFYTINLII (219 aa)) are extracellular. N-linked (GlcNAc...) asparagine glycosylation is found at Asn-47 and Asn-164. Disulfide bonds link Cys-151–Cys-165 and Cys-215–Cys-216. A helical transmembrane segment spans residues 243–258 (PCLLISFLTILVFYLP). Topologically, residues 259 to 260 (SD) are cytoplasmic. A helical transmembrane segment spans residues 261 to 277 (CGEKVTLCISVLLSLTV). Position 263 (Glu-263) interacts with Na(+). Residues 278–299 (FLLVITETIPSTSLVIPLIGEY) are Extracellular-facing. The helical transmembrane segment at 300 to 318 (LLFTMIFVTLSIVITVFVL) threads the bilayer. Over 319–482 (NVHYRTPMTH…EDDWKYVAMV (164 aa)) the chain is Cytoplasmic. The segment at 356-389 (ESSGKGGGEIAGSSGTGGGRGAEGKKMKSSASQQ) is disordered. Positions 359–376 (GKGGGEIAGSSGTGGGRG) are enriched in gly residues. A helical transmembrane segment spans residues 483–501 (IDRIFLWVFVLVCVLGTLG). Residues 502-512 (LFLQPLIGFFS) lie on the Extracellular side of the membrane.

The protein belongs to the ligand-gated ion channel (TC 1.A.9) family. Acetylcholine receptor (TC 1.A.9.1) subfamily. Alpha-3/CHRNA3 sub-subfamily. Neuronal AChR is composed of two different types of subunits: alpha and beta. CHRNA3/Alpha-3 subunit can be combined to CHRNB2/beta-2 or CHRNB4/beta-4 to give rise to functional receptors. Expressed in retina and brain.

Its subcellular location is the synaptic cell membrane. It is found in the cell membrane. It localises to the endoplasmic reticulum. The protein resides in the golgi apparatus. It catalyses the reaction K(+)(in) = K(+)(out). It carries out the reaction Na(+)(in) = Na(+)(out). The enzyme catalyses Ca(2+)(in) = Ca(2+)(out). With respect to regulation, activated by a myriad of ligands such as acetylcholine, cytisine, nicotine, choline and epibatidine. The heteropentamer CHRNA3:CHRNB2 activity is blocked by alpha-conotoxins ImI, ImII, PnIA, GID and MII. The heteropentamer CHRNA3:CHRNB4 activity is blocked by the alpha-conotoxin ImI and AuIB. Functionally, component of neuronal acetylcholine receptors (nAChRs) that function as pentameric, ligand-gated cation channels with high calcium permeability among other activities. nAChRs are excitatory neurotrasnmitter receptors formed by a collection of nAChR subunits known to mediate synaptic transmission in the nervous system and the neuromuscular junction. Each nAchR subunit confers differential attributes to channel properties, including activation, deactivation and desensitization kinetics, pH sensitivity, cation permeability, and binding to allosteric modulators. CHRNA3 forms heteropentameric neuronal acetylcholine receptors with CHRNB2 and CHRNB4. CHRNA3:CHRNB4 being predominant in neurons of the autonomic ganglia, it is known as ganglionic nicotinic receptor. CHRNA3:CHRNB4 also plays an important role in the habenulo-interpeduncular tract, modulating the mesolimbic dopamine system and affecting reward circuits and addiction. Hypothalamic CHRNA3:CHRNB4 nAChR activation by nicotine leads to activation of POMC neurons and a decrease in food intake. Also expressed in the urothelium where it modulates reflex bladder activity by increasing intracellular calcium through extracellular influx and basal ATP release. The polypeptide is Neuronal acetylcholine receptor subunit alpha-3 (chrna3) (Carassius auratus (Goldfish)).